The chain runs to 459 residues: 5-hydroxytryptamine receptor 2C (459 aa).

Positions 1-32 (MVNLGTAVRSLLVHLIGLLVWQFDISISPVAA) are cleaved as a signal peptide. The Extracellular segment spans residues 33–56 (IVTDTFNSSDGGRLFQFPDGVQNW). Residues 57 to 81 (PALSIVVIIIMTIGGNILVIMAVSM) form a helical membrane-spanning segment. The Cytoplasmic portion of the chain corresponds to 82–87 (EKKLHN). A helical transmembrane segment spans residues 88 to 112 (ATNYFLMSLAIADMLVGLLVMPLSL). The Extracellular portion of the chain corresponds to 113-129 (LAILYDYVWPLPRYLCP). A disulfide bridge connects residues Cys128 and Cys208. Residues 130-152 (VWISLDVLFSTASIMHLCAISLD) traverse the membrane as a helical segment. Thr140 provides a ligand contact to ergotamine. Residues 152–154 (DRY) carry the DRY motif; important for ligand-induced conformation changes motif. The Cytoplasmic portion of the chain corresponds to 153 to 168 (RYVAIRNPIEHSRFNS). Residues 169–190 (RTKAIMKIAIVWAISIGVSVPI) traverse the membrane as a helical segment. Over 191–214 (PVIGLRDESKVFVNNTTCVLNDPN) the chain is Extracellular. N-linked (GlcNAc...) asparagine glycosylation is found at Asn204 and Asn205. Leu210 provides a ligand contact to ergotamine. Residues 215–237 (FVLIGSFVAFFIPLTIMVITYFL) form a helical membrane-spanning segment. The Cytoplasmic segment spans residues 238-312 (TIYVLRRQTL…AINNEKKASK (75 aa)). Residues 274 to 302 (DEEENAPNPNPDQKPRRKKKEKRPRGTMQ) are disordered. Residues 288–298 (PRRKKKEKRPR) are compositionally biased toward basic residues. The chain crosses the membrane as a helical span at residues 313–337 (VLGIVFFVFLIMWCPFFITNILSVL). An intrachain disulfide couples Cys338 to Cys342. Topologically, residues 338–348 (CGKACNQKLME) are extracellular. A helical transmembrane segment spans residues 349–371 (KLLNVFVWIGYVCSGINPLVYTL). Residues 365–369 (NPLVY) carry the NPxxY motif; important for ligand-induced conformation changes and signaling motif. Over 372-459 (FNKIYRRAFS…NVVSERISSV (88 aa)) the chain is Cytoplasmic. Positions 457 to 459 (SSV) match the PDZ-binding motif.

It belongs to the G-protein coupled receptor 1 family. As to quaternary structure, interacts with MPDZ. Interacts with ARRB2. Interacts with MPP3; this interaction stabilizes the receptor at the plasma membrane and prevents the desensitization of the HTR2C receptor-mediated calcium response. In terms of tissue distribution, detected in brain cortex, hypothalamus, brainstem and arcuate nucleus. Detected in the paraventricular nucleus of the hypothalamus.

The protein resides in the cell membrane. Functionally, G-protein coupled receptor for 5-hydroxytryptamine (serotonin). Also functions as a receptor for various drugs and psychoactive substances, including ergot alkaloid derivatives, 1-2,5,-dimethoxy-4-iodophenyl-2-aminopropane (DOI) and lysergic acid diethylamide (LSD). Ligand binding causes a conformation change that triggers signaling via guanine nucleotide-binding proteins (G proteins) and modulates the activity of downstream effectors. HTR2C is coupled to G(q)/G(11) G alpha proteins and activates phospholipase C-beta, releasing diacylglycerol (DAG) and inositol 1,4,5-trisphosphate (IP3) second messengers that modulate the activity of phosphatidylinositol 3-kinase and promote the release of Ca(2+) ions from intracellular stores, respectively. Beta-arrestin family members inhibit signaling via G proteins and mediate activation of alternative signaling pathways. Regulates neuronal activity via the activation of short transient receptor potential calcium channels in the brain, and thereby modulates the activation of pro-opiomelanocortin neurons and the release of CRH that then regulates the release of corticosterone. Plays a role in the regulation of appetite and eating behavior, responses to anxiogenic stimuli and stress. Plays a role in insulin sensitivity and glucose homeostasis. The protein is 5-hydroxytryptamine receptor 2C of Mus musculus (Mouse).